A 173-amino-acid chain; its full sequence is MDAVVNLTTLPYRRSVGILVFNHEGKVWVGRRLMVCIHEDTKIYHRWQLPQGGIDENEEPLDAARRELYEETGIRSIELIKEAKYWFHYDFPQEIVGSVLGSKYRGQIQKWFAFQFTGELSEIKINPPPDGHKAEFDQWKWVDLETLPSIVISFKKHVYMKIVNEFRGSFKGL.

The 154-residue stretch at 11–164 (PYRRSVGILV…KKHVYMKIVN (154 aa)) folds into the Nudix hydrolase domain. The Nudix box signature appears at 52-73 (GGIDENEEPLDAARRELYEETG).

Belongs to the Nudix hydrolase family. RppH subfamily. It depends on a divalent metal cation as a cofactor.

Its function is as follows. Accelerates the degradation of transcripts by removing pyrophosphate from the 5'-end of triphosphorylated RNA, leading to a more labile monophosphorylated state that can stimulate subsequent ribonuclease cleavage. This Bartonella henselae (strain ATCC 49882 / DSM 28221 / CCUG 30454 / Houston 1) (Rochalimaea henselae) protein is RNA pyrophosphohydrolase.